The following is a 256-amino-acid chain: Imidazole glycerol phosphate synthase subunit HisF (256 aa).

Active-site residues include D11 and D130.

The protein belongs to the HisA/HisF family. In terms of assembly, heterodimer of HisH and HisF.

Its subcellular location is the cytoplasm. The enzyme catalyses 5-[(5-phospho-1-deoxy-D-ribulos-1-ylimino)methylamino]-1-(5-phospho-beta-D-ribosyl)imidazole-4-carboxamide + L-glutamine = D-erythro-1-(imidazol-4-yl)glycerol 3-phosphate + 5-amino-1-(5-phospho-beta-D-ribosyl)imidazole-4-carboxamide + L-glutamate + H(+). It participates in amino-acid biosynthesis; L-histidine biosynthesis; L-histidine from 5-phospho-alpha-D-ribose 1-diphosphate: step 5/9. In terms of biological role, IGPS catalyzes the conversion of PRFAR and glutamine to IGP, AICAR and glutamate. The HisF subunit catalyzes the cyclization activity that produces IGP and AICAR from PRFAR using the ammonia provided by the HisH subunit. The chain is Imidazole glycerol phosphate synthase subunit HisF from Methylocella silvestris (strain DSM 15510 / CIP 108128 / LMG 27833 / NCIMB 13906 / BL2).